A 156-amino-acid chain; its full sequence is MKIQLIAVGTKMPKWVEEGYKEYSRRFPKDMPLELVEITAGKRGKNADITRILQKEGEAMLAAVPKGNRIVTLDIPGKRWDTEQLAEQLEAWKLDARDVSILIGGPEGLAPACKAAADQSWSLSPLTLPHPLVRVVMAESLYRAWSITANHPYHRE.

Residues leucine 73, glycine 104, and 123 to 128 (LSPLTL) each bind S-adenosyl-L-methionine.

The protein belongs to the RNA methyltransferase RlmH family. Homodimer.

Its subcellular location is the cytoplasm. It carries out the reaction pseudouridine(1915) in 23S rRNA + S-adenosyl-L-methionine = N(3)-methylpseudouridine(1915) in 23S rRNA + S-adenosyl-L-homocysteine + H(+). In terms of biological role, specifically methylates the pseudouridine at position 1915 (m3Psi1915) in 23S rRNA. This Aliivibrio fischeri (strain MJ11) (Vibrio fischeri) protein is Ribosomal RNA large subunit methyltransferase H.